The primary structure comprises 236 residues: Orotidine 5'-phosphate decarboxylase (236 aa).

Substrate-binding positions include aspartate 14, lysine 36, 63-72 (DLKFHDIPNT), threonine 123, arginine 184, glutamine 193, glycine 213, and arginine 214. Lysine 65 functions as the Proton donor in the catalytic mechanism.

This sequence belongs to the OMP decarboxylase family. Type 1 subfamily. As to quaternary structure, homodimer.

It catalyses the reaction orotidine 5'-phosphate + H(+) = UMP + CO2. The protein operates within pyrimidine metabolism; UMP biosynthesis via de novo pathway; UMP from orotate: step 2/2. Catalyzes the decarboxylation of orotidine 5'-monophosphate (OMP) to uridine 5'-monophosphate (UMP). This is Orotidine 5'-phosphate decarboxylase from Marinobacter nauticus (strain ATCC 700491 / DSM 11845 / VT8) (Marinobacter aquaeolei).